A 1107-amino-acid chain; its full sequence is Lon protease homolog, mitochondrial (1107 aa).

Residues 1 to 31 constitute a mitochondrion transit peptide; sequence MLSRQRIPRILASRTSLAHSIRSFTSTTSSI. Disordered stretches follow at residues 32 to 152 and 273 to 329; these read RPVA…PGDK and PEAA…PYEP. The span at 51–60 shows a compositional bias: polar residues; the sequence is TNLSSFSTYT. A compositionally biased stretch (basic and acidic residues) spans 80–101; sequence EEERKANVEHAEAEAKEAESKQ. A compositionally biased stretch (gly residues) spans 122–141; that stretch reads GAAGGSSAGSGSGADGGSGD. The span at 142–152 shows a compositional bias: basic and acidic residues; sequence GGKRGRKPGDK. Residues 166–441 form the Lon N-terminal domain; sequence VMAIPIAKRP…KALLVLKKEH (276 aa). 594 to 601 is a binding site for ATP; it reads GPPGVGKT. The segment at 808–858 is disordered; that stretch reads PESEALTEEGKAAQEETEKKKSEEAASGETSSPKAATEASEKETTEKPRVA. Residues 815 to 831 show a composition bias toward basic and acidic residues; the sequence is EEGKAAQEETEKKKSEE. Positions 832–845 are enriched in low complexity; that stretch reads AASGETSSPKAATE. A compositionally biased stretch (basic and acidic residues) spans 846–856; the sequence is ASEKETTEKPR. The Lon proteolytic domain maps to 891 to 1077; that stretch reads VTPPGVTMGL…SEVFDLIFPK (187 aa). Catalysis depends on residues Ser983 and Lys1026. Positions 1085 to 1107 are disordered; that stretch reads KSRIIEDDKSEKEESKKKNDDDE.

It belongs to the peptidase S16 family. In terms of assembly, homohexamer or homoheptamer. Organized in a ring with a central cavity.

It is found in the mitochondrion matrix. It catalyses the reaction Hydrolysis of proteins in presence of ATP.. ATP-dependent serine protease that mediates the selective degradation of misfolded, unassembled or oxidatively damaged polypeptides as well as certain short-lived regulatory proteins in the mitochondrial matrix. May also have a chaperone function in the assembly of inner membrane protein complexes. Participates in the regulation of mitochondrial gene expression and in the maintenance of the integrity of the mitochondrial genome. Binds to mitochondrial DNA in a site-specific manner. The sequence is that of Lon protease homolog, mitochondrial (pim1) from Neurospora crassa (strain ATCC 24698 / 74-OR23-1A / CBS 708.71 / DSM 1257 / FGSC 987).